We begin with the raw amino-acid sequence, 7158 residues long: Twitchin (7158 aa).

2 consecutive Ig-like domains span residues 5–97 (PRFT…INLN) and 111–204 (PSFV…LALN). Intrachain disulfides connect cysteine 25–cysteine 81 and cysteine 132–cysteine 188. Disordered stretches follow at residues 204-381 (NFEE…PIVL), 473-639 (EEEL…TKLR), 658-732 (KKVK…DSMA), and 763-955 (EVKE…IDMR). Residues 220–238 (TASPRPSSRGPGSRPSSPK) show a composition bias toward low complexity. Composition is skewed to basic and acidic residues over residues 242–259 (KSRE…EGSP) and 279–291 (ESRR…KMEV). 2 stretches are compositionally biased toward low complexity: residues 319 to 340 (SPST…RKGS) and 347 to 368 (SGTT…ASSD). The Ig-like 3 domain occupies 377–466 (PPIVLEASRS…GEGQSSAMVK (90 aa)). Over residues 504-513 (RVARRSKSKS) the composition is skewed to basic residues. Residues 514–523 (KSPAPQAKKS) show a composition bias toward low complexity. Basic and acidic residues-rich tracts occupy residues 529–540 (GRQEASEVEHKR) and 601–618 (KTDS…DTLL). Residues 620 to 630 (KTTTSTKNESS) are compositionally biased toward low complexity. A Kelch 1 repeat occupies 718–764 (VKSGAGGLEKSDSMASLKKLDLKKGKIDDNSDGAFKVQLKKVVKKEV). Composition is skewed to basic and acidic residues over residues 763 to 813 (EVKE…DKPK), 837 to 850 (KEVE…ELKA), 885 to 897 (KAHD…EGIK), and 917 to 955 (SESR…IDMR). In terms of domain architecture, Ig-like 4 spans 980–1072 (PKIVEVPENV…DSADVKLLVT (93 aa)). The segment at 1088–1118 (SQAGFQKDGEGGGAGGGGGEKKPMTEAERRQ) is disordered. Residues 1106–1118 (GEKKPMTEAERRQ) are compositionally biased toward basic and acidic residues. Ig-like domains are found at residues 1122 to 1213 (PGKK…AQLT), 1217 to 1306 (PPMK…SKVQ), and 1312 to 1398 (PRHT…AQLI). Cysteine 1150 and cysteine 1201 form a disulfide bridge. 8 Fibronectin type-III domains span residues 1598-1690 (PKGP…AKNP), 1696-1791 (KPKN…MKAK), 1891-1988 (PPKG…IKDP), 1994-2087 (KPGR…AKPK), 2189-2282 (PNGP…AKNP), 2288-2383 (KTGT…AKPR), 2483-2576 (PLGP…AKNP), and 2579-2675 (VPGK…AKPR). The Kelch 2 repeat unit spans residues 2014–2058 (PPHKDGGAPIEEYIVEVRDPDTKEWKEVKRVPDTNASISGLKEGK). The region spanning 2086–2181 (PKFIPAWLKH…GADEEKANLT (96 aa)) is the Ig-like 8 domain. Residues 2207–2253 (WKPPDDDGGEPIEYYEVEKLDTATGRWVPCAKVKDTKAHIDGLKKGQ) form a Kelch 3 repeat. Residues 2266–2287 (GASDALSTDKDTKAKNPYDEPG) show a composition bias toward basic and acidic residues. Residues 2266 to 2295 (GASDALSTDKDTKAKNPYDEPGKTGTPDVV) form a disordered region. Residues 2502 to 2547 (KVPEDDGGAPIDHYEIEKMDLATGRWVPCGRSETTKTTVPNLQPGH) form a Kelch 4 repeat. Residues 2679-2763 (PRIHREDLSD…TNINGTDSVT (85 aa)) enclose the Ig-like 9 domain. Fibronectin type-III domains are found at residues 2775–2868 (PKGP…AKNP) and 2874–2968 (RPGR…AKPR). A Kelch 5 repeat occupies 2793–2839 (WKPPEDDGGEPIEFYEIEKMNTKDGIWVPCGRSGDTHFTVDSLNKGD). Positions 2849–2901 (NSEGPSDPLETETDILAKNPFDRPDRPGRPEPTDWDSDHVDLKWDPPLSDGGA) are disordered. Basic and acidic residues predominate over residues 2868 to 2892 (PFDRPDRPGRPEPTDWDSDHVDLKW). One can recognise an Ig-like 10 domain in the interval 2972-3062 (PHIDRDALKN…GEDEATVKIN (91 aa)). Fibronectin type-III domains are found at residues 3070-3165 (PNGP…AKDP) and 3171-3265 (KTNA…AKAR). Residues 3089–3134 (RAPDDDGGIPIENYVIEKYDTASGRWVPAAKVAGDKTTAVVDGLIP) form a Kelch 6 repeat. Positions 3268–3358 (PPVIDRNSIQ…GTDTAEVKVT (91 aa)) constitute an Ig-like 11 domain. Fibronectin type-III domains are found at residues 3365–3459 (SPRG…AKDP) and 3465–3559 (KPGT…AKPR). A Kelch 7 repeat occupies 3384–3430 (WKEPEDDGGAEISHYVIEKQDAATGRWTACGESKDTNFHVDDLTQGH). The Ig-like 12 domain occupies 3563-3653 (PKINRDMFVA…GKDEHEVDVN (91 aa)). Fibronectin type-III domains are found at residues 3661-3753 (PEGP…AKNP), 3759-3853 (APTD…AKPR), 3954-4047 (PEGP…AKNQ), 4053-4146 (PVDK…TKAR), 4246-4340 (PEGP…AKDP), and 4346-4440 (KPGR…TAKP). Residues 3972–4018 (WKPPTDNGGTDVLHYIVEKMDTSRGTWQEVGTFPDCTAKVNKLVPGK) form a Kelch 8 repeat. Kelch repeat units follow at residues 4265 to 4310 (KPPK…LTEG) and 4365 to 4410 (DPPR…RVQK). The Ig-like 13 domain occupies 4445–4531 (PKFDLDLDGK…GEAEANIKIT (87 aa)). 8 consecutive Fibronectin type-III domains span residues 4538-4631 (APEN…IKDP), 4637-4733 (APST…CRPY), 4739-4834 (APDA…IEEQ), 4936-5028 (PTGP…AKNP), 5034-5129 (APGQ…ADNA), 5231-5326 (SPQH…VAKY), 5333-5427 (QPEA…LKSR), and 5430-5528 (PPGP…IQES). The stretch at 4557–4602 (DAPKDDGGAEIAGYKIEYQEVGSQIWDKVPGLISGTAYTVRGLEHG) is one Kelch 11 repeat. One copy of the Kelch 12 repeat lies at 5287 to 5335 (LNYTVGGLIKDNRYRFRVRAETQYGVSEPCELADVVVAKYQFEVPNQPE). The Ig-like 14 domain maps to 5533 to 5621 (PQIVVKPEDT…GSDTATANLV (89 aa)). 2 Fibronectin type-III domains span residues 5723–5817 (PQGP…ARLP) and 5823–5919 (SPLN…ASGS). The Kelch 13 repeat unit spans residues 5742-5787 (RPPVTDGGSKITSYVVEKRDLSKDEWVTVTSNVKDMNYIVTGLFEN). Ig-like domains are found at residues 5923–6011 (PKIV…ANLR) and 6016–6107 (PRVF…VNVT). The cysteines at positions 5944 and 5995 are disulfide-linked. Positions 6114–6207 (PPRFPIIENI…PTAPVLIPGD (94 aa)) constitute a Fibronectin type-III 31 domain. The 256-residue stretch at 6261 to 6516 (YDIHEELGTG…IHQALEHPWL (256 aa)) folds into the Protein kinase domain. Residues 6267–6275 (LGTGAFGVV) and lysine 6290 contribute to the ATP site. Aspartate 6382 serves as the catalytic Proton acceptor. Residues 6517 to 6581 (TPGNAPGRDS…SIRDAFWDRS (65 aa)) form a C-terminal regulatory domain (CDR) region. Ig-like domains follow at residues 6585–6673 (PRFI…VFLN), 6696–6795 (PRVE…CVLT), 6863–6952 (PSFT…ATLT), 6958–7059 (PLLN…ASLV), and 7067–7149 (PPVT…KAIA).

The protein belongs to the protein kinase superfamily. CAMK Ser/Thr protein kinase family. As to quaternary structure, may interact (via protein kinase and CRD domains) with mak-1 (via protein kinase domain). The cofactor is Mg(2+). Phosphorylated by mak-1 on the protein kinase domain and/or CDR domain in vitro. Expressed in body wall, anal, vulval, and pharyngeal muscles (at protein level).

It localises to the cytoplasm. The protein localises to the myofibril. Its subcellular location is the sarcomere. The protein resides in the a band. The enzyme catalyses L-seryl-[protein] + ATP = O-phospho-L-seryl-[protein] + ADP + H(+). The catalysed reaction is L-threonyl-[protein] + ATP = O-phospho-L-threonyl-[protein] + ADP + H(+). With respect to regulation, forces generated by the contraction/relaxation cycles of muscle activity separate the regulatory domain from the catalytic core, activating the enzyme. At rest, the kinase domain is in a closed conformation. The active site is occupied by the autoinhibitory region (CDR), which makes extensive contact with the catalytic site, blocking substrate binding. At low forces the regulatory tail will unravel reversibly and expose the active site to its substrates, potentially stabilized by binding of Ca/CALM. At high forces the kinase begins to unfold and the integrity of the active site is disrupted. Its function is as follows. Regulator of muscle contraction and relaxation. Senses mechanical strain that occurs during muscle activity by unfolding in clearly resolvable steps at differing forces. Plays a role in the organization of sarcomeres in body wall muscles. This Caenorhabditis elegans protein is Twitchin.